A 429-amino-acid chain; its full sequence is L-threonine dehydratase biosynthetic IlvA (429 aa).

An N6-(pyridoxal phosphate)lysine modification is found at Lys-66. Pyridoxal 5'-phosphate is bound by residues Asn-93, 196–200 (GGGGC), and Ser-322. One can recognise an ACT-like domain in the interval 346 to 420 (HYFLVDFPQE…TDIHVEALEP (75 aa)).

Belongs to the serine/threonine dehydratase family. In terms of assembly, homotetramer. It depends on pyridoxal 5'-phosphate as a cofactor.

The enzyme catalyses L-threonine = 2-oxobutanoate + NH4(+). Its pathway is amino-acid biosynthesis; L-isoleucine biosynthesis; 2-oxobutanoate from L-threonine: step 1/1. Catalyzes the anaerobic formation of alpha-ketobutyrate and ammonia from threonine in a two-step reaction. The first step involved a dehydration of threonine and a production of enamine intermediates (aminocrotonate), which tautomerizes to its imine form (iminobutyrate). Both intermediates are unstable and short-lived. The second step is the nonenzymatic hydrolysis of the enamine/imine intermediates to form 2-ketobutyrate and free ammonia. In the low water environment of the cell, the second step is accelerated by RidA. The chain is L-threonine dehydratase biosynthetic IlvA (ilvA) from Mycobacterium bovis (strain ATCC BAA-935 / AF2122/97).